Here is a 311-residue protein sequence, read N- to C-terminus: Cytochrome f (311 aa).

The N-terminal stretch at M1 to A27 is a signal peptide. 4 residues coordinate heme: Y28, C48, C51, and H52. A helical transmembrane segment spans residues I277 to K297.

This sequence belongs to the cytochrome f family. As to quaternary structure, the 4 large subunits of the cytochrome b6-f complex are cytochrome b6, subunit IV (17 kDa polypeptide, PetD), cytochrome f and the Rieske protein, while the 4 small subunits are PetG, PetL, PetM and PetN. The complex functions as a dimer. Heme serves as cofactor.

It is found in the cellular thylakoid membrane. Functionally, component of the cytochrome b6-f complex, which mediates electron transfer between photosystem II (PSII) and photosystem I (PSI), cyclic electron flow around PSI, and state transitions. The polypeptide is Cytochrome f (Parasynechococcus marenigrum (strain WH8102)).